The sequence spans 276 residues: Pyridinium-3,5-bisthiocarboxylic acid mononucleotide synthase (276 aa).

The active-site Nucleophile and sulfur donor is C176. Residue C176 is modified to 2,3-didehydroalanine (Cys).

It belongs to the LarE family.

It carries out the reaction pyridinium-3,5-dicarboxylate mononucleotide + [LarE protein]-L-cysteine + ATP = [LarE protein]-dehydroalanine + pyridinium-3-carboxylate-5-thiocarboxylate mononucleotide + AMP + diphosphate + H(+). It catalyses the reaction [LarE protein]-L-cysteine + pyridinium-3-carboxylate-5-thiocarboxylate mononucleotide + ATP = pyridinium-3,5-bisthiocarboxylate mononucleotide + [LarE protein]-dehydroalanine + AMP + diphosphate + H(+). Its function is as follows. Involved in the biosynthesis of a nickel-pincer cofactor ((SCS)Ni(II) pincer complex). Catalyzes the ATP-dependent incorporation of two sulfur atoms in pyridinium-3,5-biscarboxylic acid mononucleotide (P2CMN) to yield pyridinium-3,5-bisthiocarboxylic acid mononucleotide (P2TMN). The source of sulfur is the enzyme itself: Cys-176 of LarE is the sulfur donor, thereby being converted into dehydroalanine, and is not regenerated in vivo. Thus, two molecules of LarE undergo sacrificial sulfur transfer to create one P2TMN. Binds nickel. Is required for the activation of the lactate racemase LarA. May also be involved in the activation of other nickel-pincer cofactor-dependent enzymes. The chain is Pyridinium-3,5-bisthiocarboxylic acid mononucleotide synthase from Lactiplantibacillus plantarum (strain ATCC BAA-793 / NCIMB 8826 / WCFS1) (Lactobacillus plantarum).